A 401-amino-acid polypeptide reads, in one-letter code: Glycerol-3-phosphate dehydrogenase [NAD(+)] 1 (401 aa).

NAD(+) contacts are provided by residues 40 to 45 (GSGNWG), Phe128, Lys151, and Ala184. Lys151 serves as a coordination point for substrate. Lys244 functions as the Proton acceptor in the catalytic mechanism. NAD(+)-binding residues include Arg309 and Gln338. 309 to 310 (RN) is a substrate binding site.

This sequence belongs to the NAD-dependent glycerol-3-phosphate dehydrogenase family.

The protein localises to the cytoplasm. It carries out the reaction sn-glycerol 3-phosphate + NAD(+) = dihydroxyacetone phosphate + NADH + H(+). The protein is Glycerol-3-phosphate dehydrogenase [NAD(+)] 1 (GPD1) of Zygosaccharomyces rouxii.